We begin with the raw amino-acid sequence, 932 residues long: MVNTLYNNNNGNNNIINNNNNNGFNNINNGQNLHRLENGHNNNIANSNNINNNNNISGNIVNNNNNNNNNNSNNNNNNNNNNNNNNNNNSNNSNNSNNINNIISSDGRRRGSINKSNMLTHSNLSNNLKIRNKLANQIDNEEKRQHILGKNLIKLTNMGIGPNNNNHNNHQNNNNSNNNNNNNNNNNNNNNNNNNNNNNNNNNNNNNNNNNNNNNNNNLVINNNKNNYINYNNGGNNYGNNTPVNYIHNNSTPRPRHSSLRTNLSDEEDSVLYSSDDSEESDYEEEEKKHLKYANRNFSGVLNNNNNINNNNMNNNINYNFNNNNNNVNNVNINNNNNNNSSNNNNNNSNNNNQLYNNHNNGNPNFYINNNNNNSNNIGHNNNNNNNNVNNNNISNNNNLNNFNNYNYNNNNNNNNNNNNNNNNNNNNNNNNNNNNNNNNNNNNNNNNNNNNNNNNNNNNNNNNNNNNNNNNNNNENYVGSSLSNSADNTESSKWRIYPSTRARQRSIASEEDSLGSRRSSLGSANDIPNSYPISPTKQQLLHYGMQSPVYSPPNNLSPLSSPYLHHNSNNNSNNGGGNSNNNNTNFNYGGNIGLERPKTSPLSYGERDPPHVINHDRRLKTPSFIDDINENNLQQSQHQHQQQQQQPQSQQQPFYSPYQSPPSSSHGNRPKTPKIISTPEGYIISSDDGSRLVVSPPNTSISSLSSMVDDNHHNQPPLVPNFSSFQQQQQLRQLQQQQLHQQQLLQQQQQQQQQQQQVPTHQQQSQSRPQTPIYLSQQQPQNPIDLMSNRRLNSAQNMKLSVSSPQLGRDVNSSNNNKNISNNNNNNNNNNNNNNNNNNNNNNKNNNINNNSEPKKPKFPLEDEKLDRDQLINEYKESSLRLDLFVNSLDEYDQQQRDISDIDNYIYNLCLCNNLEKHDSKEDEMLFDPNL.

5 disordered regions span residues 26–120 (NINN…NMLT), 158–289 (MGIG…EEKK), 304–617 (NNNN…INHD), 635–720 (QQSQ…PPLV), and 802–863 (SVSS…FPLE). Composition is skewed to low complexity over residues 41–105 (NNNI…IISS) and 163–241 (NNNN…YGNN). A compositionally biased stretch (polar residues) spans 242–253 (TPVNYIHNNSTP). Residues 265 to 285 (SDEEDSVLYSSDDSEESDYEE) show a composition bias toward acidic residues. The span at 304–475 (NNNNINNNNM…NNNNNNNNNN (172 aa)) shows a compositional bias: low complexity. Composition is skewed to polar residues over residues 476–492 (ENYVGSSLSNSADNTES) and 527–540 (DIPNSYPISPTKQQ). Over residues 548–590 (SPVYSPPNNLSPLSSPYLHHNSNNNSNNGGGNSNNNNTNFNYG) the composition is skewed to low complexity. Positions 606–617 (GERDPPHVINHD) are enriched in basic and acidic residues. Composition is skewed to low complexity over residues 635-666 (QQSQHQHQQQQQQPQSQQQPFYSPYQSPPSSS), 696-707 (SPPNTSISSLSS), and 813-853 (NSSN…NNNS). The segment covering 854–863 (EPKKPKFPLE) has biased composition (basic and acidic residues).

This is an uncharacterized protein from Dictyostelium discoideum (Social amoeba).